Consider the following 120-residue polypeptide: MTDPAGADERFLGAHRLHKTDEFSSVFAFRRALRGRYFMLHYRPNALTTARLGVVVAKKLAKRANVRNLVKRIARERFRRQRTVLPAHDLIVRLHAPVTEASRAALNQDLLQLFGRLPQT.

The protein belongs to the RnpA family. As to quaternary structure, consists of a catalytic RNA component (M1 or rnpB) and a protein subunit.

The catalysed reaction is Endonucleolytic cleavage of RNA, removing 5'-extranucleotides from tRNA precursor.. RNaseP catalyzes the removal of the 5'-leader sequence from pre-tRNA to produce the mature 5'-terminus. It can also cleave other RNA substrates such as 4.5S RNA. The protein component plays an auxiliary but essential role in vivo by binding to the 5'-leader sequence and broadening the substrate specificity of the ribozyme. The polypeptide is Ribonuclease P protein component (Azoarcus sp. (strain BH72)).